Consider the following 181-residue polypeptide: Ribulose bisphosphate carboxylase small subunit, chloroplastic 1 (181 aa).

The N-terminal 57 residues, 1 to 57, are a transit peptide targeting the chloroplast; it reads MASSIVSSAAVATRSNVAQASMVAPFTGLKSAASFPVTKKNNNVDITSLASNGGRVR.

The protein belongs to the RuBisCO small chain family. As to quaternary structure, heterohexadecamer of 8 large and 8 small subunits.

Its subcellular location is the plastid. It is found in the chloroplast. RuBisCO catalyzes two reactions: the carboxylation of D-ribulose 1,5-bisphosphate, the primary event in carbon dioxide fixation, as well as the oxidative fragmentation of the pentose substrate. Both reactions occur simultaneously and in competition at the same active site. Although the small subunit is not catalytic it is essential for maximal activity. The sequence is that of Ribulose bisphosphate carboxylase small subunit, chloroplastic 1 from Solanum tuberosum (Potato).